Reading from the N-terminus, the 163-residue chain is Large ribosomal subunit protein uL11 (163 aa).

The disordered stretch occupies residues 1 to 25 (MAGTIEVLVAGGQADPGPPLGPELG).

Belongs to the universal ribosomal protein uL11 family. In terms of assembly, part of the ribosomal stalk of the 50S ribosomal subunit. Interacts with L10 and the large rRNA to form the base of the stalk. L10 forms an elongated spine to which L12 dimers bind in a sequential fashion forming a multimeric L10(L12)X complex.

Functionally, forms part of the ribosomal stalk which helps the ribosome interact with GTP-bound translation factors. The protein is Large ribosomal subunit protein uL11 of Natronomonas pharaonis (strain ATCC 35678 / DSM 2160 / CIP 103997 / JCM 8858 / NBRC 14720 / NCIMB 2260 / Gabara) (Halobacterium pharaonis).